The chain runs to 385 residues: ELAV-like protein 4 (385 aa).

Residues 12–48 form a disordered region; that stretch reads TMEPQVSNGPTSNTSNGPSSNNRNCPSPMQTGAATDD. Residues 18–33 are compositionally biased toward low complexity; the sequence is SNGPTSNTSNGPSSNN. Polar residues predominate over residues 34–44; the sequence is RNCPSPMQTGA. Ser-38 is modified (phosphoserine). 2 consecutive RRM domains span residues 51-129 and 137-217; these read TNLI…YARP and ANLY…FANN. Position 233 is a phosphoserine (Ser-233). Arg-248 carries the asymmetric dimethylarginine; by CARM1; alternate modification. Arg-248 carries the omega-N-methylarginine; by CARM1; alternate modification. The RRM 3 domain occupies 302-380; sequence WCIFVYNLSP…RVLQVSFKTN (79 aa).

It belongs to the RRM elav family. As to quaternary structure, component of a TAU mRNP complex, at least composed of IGF2BP1, ELAVL4 and G3BP. Associates with the EIF4F cap-binding complex, composed of EIF4G, EIF4A, EIF4E and PABP. Within the EIF4F cap-binding complex, interacts with EIF4A. Interacts with SMN (via Tudor domain) in an RNA-independent manner; the interaction is required for localization of ELAVL4 to RNA granules. Interacts with MAP1 light chain LC1 (via C-terminus); the interaction contributes to the association of ELAVL4 with microtubules. Interacts with MAP1 light chain LC2. Methylated by CARM1, which leads to reduced RNA-binding activity and enhanced interaction with SMN. Methylation at Arg-248 by CARM1 weakens protective binding to the 3'UTR of CDKN1A mRNA and down-regulates CDKN1A protein expression, thereby maintaining cells in a proliferative state. Methylation is inhibited by NGF, which facilitates neurite outgrowth. Expressed in the brain, including the hippocampus, and in pancreatic beta cells (at protein level). Expressed in pyramidal neurons of the hippocampal CA3 and CA1 region and in the hilus but not in dentate granule cells (at protein level). Expressed in the dorsal root ganglion and the spinal cord (at protein level). Expressed in neural stem and progenitor cells (at protein level). Expressed in radial glia-like cells and in transient amplifying cells in the subventricular zone (SVZ), and in immature neurons both in the SVZ and the rostral migratory stream as well as in mature neurons in the olfactory bulb (at protein level). Expressed in testis and in the brain, including the hippocampus, the neocortex and the cerebellum. Expressed in lower- but not upper-layer primary neurons of the mature neocortex, in the hippocampal regions CA1-3 and the dentate gyrus. Expressed in the mitral and granule cells of the olfactory bulb, cerebral cortex, entorhinal cortex, thalamus, medial habenula, amygdala, granule cells of the cerebellum, pons, olivary nucleus, dorsal and ventral spinal cord and in dorsal root ganglia. Expressed in motor neurons. Isoform 4: Expressed in the brain. Isoform 5: Expressed in the brain. Isoform 6: Expressed in the brain. Isoform 7: Expressed in the brain. Isoform 8: Expressed in the brain. Isoform 9: Expressed in the brain. Isoform 10: Expressed in the brain. Isoform 11: Expressed in the brain.

The protein resides in the cytoplasm. Its subcellular location is the perikaryon. The protein localises to the cell projection. It localises to the dendrite. It is found in the axon. The protein resides in the growth cone. RNA-binding protein that is involved in the post-transcriptional regulation of mRNAs. Plays a role in the regulation of mRNA stability, alternative splicing and translation. Binds to AU-rich element (ARE) sequences in the 3' untranslated region (3'UTR) of target mRNAs, including GAP43, VEGF, FOS, CDKN1A and ACHE mRNA. Many of the target mRNAs are coding for RNA-binding proteins, transcription factors and proteins involved in RNA processing and/or neuronal development and function. By binding to the mRNA 3'UTR, decreases mRNA deadenylation and thereby contributes to the stabilization of mRNA molecules and their protection from decay. Also binds to the polyadenylated (poly(A)) tail in the 3'UTR of mRNA, thereby increasing its affinity for mRNA binding. Mainly plays a role in neuron-specific RNA processing by stabilization of mRNAs such as GAP43, ACHE and mRNAs of other neuronal proteins, thereby contributing to the differentiation of neural progenitor cells, nervous system development, learning and memory mechanisms. Involved in the negative regulation of the proliferative activity of neuronal stem cells and in the positive regulation of neuronal differentiation of neural progenitor cells. Promotes neuronal differentiation of neural stem/progenitor cells in the adult subventricular zone of the hippocampus by binding to and stabilizing SATB1 mRNA. Binds and stabilizes MSI1 mRNA in neural stem cells. Exhibits increased binding to ACHE mRNA during neuronal differentiation, thereby stabilizing ACHE mRNA and enhancing its expression. Protects CDKN1A mRNA from decay by binding to its 3'-UTR. May bind to APP and BACE1 mRNAS and the BACE1AS lncRNA and enhance their stabilization. Plays a role in neurite outgrowth and in the establishment and maturation of dendritic arbors, thereby contributing to neocortical and hippocampal circuitry function. Stabilizes GAP43 mRNA and protects it from decay during postembryonic development in the brain. By promoting the stabilization of GAP43 mRNA, plays a role in NGF-mediated neurite outgrowth. Binds to BDNF long 3'UTR mRNA, thereby leading to its stabilization and increased dendritic translation after activation of PKC. By increasing translation of BDNF after nerve injury, may contribute to nerve regeneration. Acts as a stabilizing factor by binding to the 3'UTR of NOVA1 mRNA, thereby increasing its translation and enhancing its functional activity in neuron-specific splicing. Stimulates translation of mRNA in a poly(A)- and cap-dependent manner, possibly by associating with the EIF4F cap-binding complex. May also negatively regulate translation by binding to the 5'UTR of Ins2 mRNA, thereby repressing its translation. Upon glucose stimulation, Ins2 mRNA is released from ELAVL4 and translational inhibition is abolished. Also plays a role in the regulation of alternative splicing. May regulate alternative splicing of CALCA pre-mRNA into Calcitonin and Calcitonin gene-related peptide 1 (CGRP) by competing with splicing regulator TIAR for binding to U-rich sequences of CALCA pre-mRNA. The sequence is that of ELAV-like protein 4 (Elavl4) from Mus musculus (Mouse).